A 502-amino-acid polypeptide reads, in one-letter code: Cytochrome P450 monooxygenase verC (502 aa).

The chain crosses the membrane as a helical span at residues 9–29 (IAALPMVSLLGAALIVVSVLG). Asn124, Asn190, Asn271, and Asn342 each carry an N-linked (GlcNAc...) asparagine glycan. Cys444 contributes to the heme binding site.

Belongs to the cytochrome P450 family. Heme is required as a cofactor.

The protein localises to the membrane. It participates in mycotoxin biosynthesis. In terms of biological role, cytochrome P450 monooxygenase; part of the gene cluster that mediates the biosynthesis of 11'-deoxyverticillin A, one of the dimeric epipolythiodioxopiperazines (ETPs) from the verticillin family that act as mycotoxins. 11'-deoxyverticillin A is required for normal conidiation. The nonribosomal peptide synthetase verP is speculated to be responsible for condensation of amino acids to form the carbon skeleton of verticillin, whereas the cluster-specific tailoring enzymes are involved in further modifications leading to the production of 11'-deoxyverticillin A. The sequence is that of Cytochrome P450 monooxygenase verC from Clonostachys rogersoniana.